A 337-amino-acid polypeptide reads, in one-letter code: Glyceraldehyde-3-phosphate dehydrogenase (337 aa).

NAD(+) contacts are provided by residues 11-12 (TI) and Gly-111. 140-142 (SCN) is a D-glyceraldehyde 3-phosphate binding site. The Nucleophile role is filled by Cys-141. Arg-169 lines the NAD(+) pocket. The segment at 177-196 (KKGPINSIVPTTEVPSHHGP) is disordered. 194 to 195 (HG) contributes to the D-glyceraldehyde 3-phosphate binding site. Gln-301 is a binding site for NAD(+).

This sequence belongs to the glyceraldehyde-3-phosphate dehydrogenase family. As to quaternary structure, homotetramer.

The protein resides in the cytoplasm. The enzyme catalyses D-glyceraldehyde 3-phosphate + phosphate + NADP(+) = (2R)-3-phospho-glyceroyl phosphate + NADPH + H(+). The catalysed reaction is D-glyceraldehyde 3-phosphate + phosphate + NAD(+) = (2R)-3-phospho-glyceroyl phosphate + NADH + H(+). Its pathway is carbohydrate degradation; glycolysis; pyruvate from D-glyceraldehyde 3-phosphate: step 1/5. The polypeptide is Glyceraldehyde-3-phosphate dehydrogenase (Methanosphaera stadtmanae (strain ATCC 43021 / DSM 3091 / JCM 11832 / MCB-3)).